The primary structure comprises 389 residues: Large ribosomal subunit protein uL3 (389 aa).

The protein belongs to the universal ribosomal protein uL3 family.

Its subcellular location is the cytoplasm. In Debaryomyces hansenii (strain ATCC 36239 / CBS 767 / BCRC 21394 / JCM 1990 / NBRC 0083 / IGC 2968) (Yeast), this protein is Large ribosomal subunit protein uL3 (RPL3).